Consider the following 48-residue polypeptide: Large ribosomal subunit protein bL34 (48 aa).

It belongs to the bacterial ribosomal protein bL34 family.

This chain is Large ribosomal subunit protein bL34 (rpmH), found in Mycoplasma genitalium (strain ATCC 33530 / DSM 19775 / NCTC 10195 / G37) (Mycoplasmoides genitalium).